The following is a 283-amino-acid chain: Phosphatidylserine decarboxylase proenzyme (283 aa).

Catalysis depends on charge relay system; for autoendoproteolytic cleavage activity residues Asp96, His152, and Ser250. The active-site Schiff-base intermediate with substrate; via pyruvic acid; for decarboxylase activity is the Ser250. Residue Ser250 is modified to Pyruvic acid (Ser); by autocatalysis.

The protein belongs to the phosphatidylserine decarboxylase family. PSD-B subfamily. Prokaryotic type I sub-subfamily. In terms of assembly, heterodimer of a large membrane-associated beta subunit and a small pyruvoyl-containing alpha subunit. Requires pyruvate as cofactor. In terms of processing, is synthesized initially as an inactive proenzyme. Formation of the active enzyme involves a self-maturation process in which the active site pyruvoyl group is generated from an internal serine residue via an autocatalytic post-translational modification. Two non-identical subunits are generated from the proenzyme in this reaction, and the pyruvate is formed at the N-terminus of the alpha chain, which is derived from the carboxyl end of the proenzyme. The autoendoproteolytic cleavage occurs by a canonical serine protease mechanism, in which the side chain hydroxyl group of the serine supplies its oxygen atom to form the C-terminus of the beta chain, while the remainder of the serine residue undergoes an oxidative deamination to produce ammonia and the pyruvoyl prosthetic group on the alpha chain. During this reaction, the Ser that is part of the protease active site of the proenzyme becomes the pyruvoyl prosthetic group, which constitutes an essential element of the active site of the mature decarboxylase.

It is found in the cell membrane. It catalyses the reaction a 1,2-diacyl-sn-glycero-3-phospho-L-serine + H(+) = a 1,2-diacyl-sn-glycero-3-phosphoethanolamine + CO2. It participates in phospholipid metabolism; phosphatidylethanolamine biosynthesis; phosphatidylethanolamine from CDP-diacylglycerol: step 2/2. Catalyzes the formation of phosphatidylethanolamine (PtdEtn) from phosphatidylserine (PtdSer). The polypeptide is Phosphatidylserine decarboxylase proenzyme (Acinetobacter baumannii (strain ATCC 17978 / DSM 105126 / CIP 53.77 / LMG 1025 / NCDC KC755 / 5377)).